The chain runs to 211 residues: Ion-translocating oxidoreductase complex subunit G (211 aa).

The chain crosses the membrane as a helical span at residues 9-29 (GLTLAIFACATTGLVAMTQYL). Thr-175 carries the FMN phosphoryl threonine modification.

The protein belongs to the RnfG family. The complex is composed of six subunits: RnfA, RnfB, RnfC, RnfD, RnfE and RnfG. FMN is required as a cofactor.

Its subcellular location is the cell inner membrane. Part of a membrane-bound complex that couples electron transfer with translocation of ions across the membrane. This Vibrio vulnificus (strain YJ016) protein is Ion-translocating oxidoreductase complex subunit G.